We begin with the raw amino-acid sequence, 422 residues long: Putative polyketide beta-ketoacyl synthase 1 (422 aa).

The Ketosynthase family 3 (KS3) domain occupies 2–416 (TRRVAVTGIG…GFQSAVLLTG (415 aa)). Catalysis depends on for beta-ketoacyl synthase activity residues Cys169, His309, and His346.

The protein belongs to the thiolase-like superfamily. Beta-ketoacyl-ACP synthases family.

Its pathway is antibiotic biosynthesis; curamycin biosynthesis. The chain is Putative polyketide beta-ketoacyl synthase 1 (curA) from Streptomyces cyaneus (Streptomyces curacoi).